Consider the following 207-residue polypeptide: Serotype 2 fimbrial subunit (207 aa).

The signal sequence occupies residues 1 to 26 (MQIPFQRALRLCLRAALAAIASAAHA). Cysteines 42 and 85 form a disulfide.

Belongs to the fimbrial protein family.

The protein resides in the fimbrium. In terms of biological role, bordetella pertussis is the causative agent of whooping cough. An essential step in the disease process is the attachment of the bacteria to the ciliated epithelium of the respiratory tract, enabling the organism to resist normal host-clearance mechanisms. It is unclear which bacterial cell surface component are responsible for adherence but the fimbriae of B.pertussis are prime candidates for being involved in this process. The polypeptide is Serotype 2 fimbrial subunit (fim2) (Bordetella pertussis (strain Tohama I / ATCC BAA-589 / NCTC 13251)).